Consider the following 531-residue polypeptide: Tryptophan biosynthesis protein TRP1 (531 aa).

The segment at 1 to 254 (MGNILEEIAA…TVKDLLQNVT (254 aa)) is indole-3-glycerol phosphate synthase. Residues 255 to 531 (RHSESGEFAL…TLKIDEETEN (277 aa)) form an N-(5'-phosphoribosyl)anthranilate isomerase region.

In the N-terminal section; belongs to the TrpC family. It in the C-terminal section; belongs to the TrpF family.

It carries out the reaction N-(5-phospho-beta-D-ribosyl)anthranilate = 1-(2-carboxyphenylamino)-1-deoxy-D-ribulose 5-phosphate. The catalysed reaction is 1-(2-carboxyphenylamino)-1-deoxy-D-ribulose 5-phosphate + H(+) = (1S,2R)-1-C-(indol-3-yl)glycerol 3-phosphate + CO2 + H2O. The protein operates within amino-acid biosynthesis; L-tryptophan biosynthesis; L-tryptophan from chorismate: step 3/5. It functions in the pathway amino-acid biosynthesis; L-tryptophan biosynthesis; L-tryptophan from chorismate: step 4/5. In terms of biological role, bifunctional enzyme that catalyzes two sequential steps of tryptophan biosynthetic pathway. This Phytophthora nicotianae (Potato buckeye rot agent) protein is Tryptophan biosynthesis protein TRP1 (TRP1).